The following is a 343-amino-acid chain: Fe-S cluster assembly protein DRE2 (343 aa).

The tract at residues 1 to 188 (MTVSRDSLVL…KKLTKKVSAI (188 aa)) is N-terminal SAM-like domain. Residues 189-240 (KLTDSDLEDDDDDLESDDSANNSKTKFFDDFDDPETGDSIDEDDLIAETEED) form a linker region. Acidic residues-rich tracts occupy residues 195-206 (LEDDDDDLESDD) and 218-228 (DFDDPETGDSI). The segment at 195 to 228 (LEDDDDDLESDDSANNSKTKFFDDFDDPETGDSI) is disordered. Positions 247, 258, 261, and 263 each coordinate [2Fe-2S] cluster. The fe-S binding site A stretch occupies residues 247–263 (CGKSKQRRRKACKDCSC). Residues C306, C309, C317, and C320 each coordinate [4Fe-4S] cluster. 2 short sequence motifs (cx2C motif) span residues 306-309 (CGSC) and 317-320 (CSGC). The fe-S binding site B stretch occupies residues 306–320 (CGSCALGDAFRCSGC).

It belongs to the anamorsin family. Monomer. Interacts with TAH18. Interacts with MIA40. [2Fe-2S] cluster is required as a cofactor. The cofactor is [4Fe-4S] cluster.

It is found in the cytoplasm. It localises to the mitochondrion intermembrane space. In terms of biological role, component of the cytosolic iron-sulfur (Fe-S) protein assembly (CIA) machinery required for the maturation of extramitochondrial Fe-S proteins. Part of an electron transfer chain functioning in an early step of cytosolic Fe-S biogenesis, facilitating the de novo assembly of a [4Fe-4S] cluster on the scaffold complex CFD1-NBP35. Electrons are transferred to DRE2 from NADPH via the FAD- and FMN-containing protein TAH18. TAH18-DRE2 are also required for the assembly of the diferric tyrosyl radical cofactor of ribonucleotide reductase (RNR), probably by providing electrons for reduction during radical cofactor maturation in the catalytic small subunit RNR2. The protein is Fe-S cluster assembly protein DRE2 of Kluyveromyces lactis (strain ATCC 8585 / CBS 2359 / DSM 70799 / NBRC 1267 / NRRL Y-1140 / WM37) (Yeast).